A 54-amino-acid polypeptide reads, in one-letter code: Large ribosomal subunit protein bL33A (54 aa).

It belongs to the bacterial ribosomal protein bL33 family.

The chain is Large ribosomal subunit protein bL33A from Mycolicibacterium paratuberculosis (strain ATCC BAA-968 / K-10) (Mycobacterium paratuberculosis).